A 219-amino-acid polypeptide reads, in one-letter code: 2-hydroxy-3-keto-5-methylthiopentenyl-1-phosphate phosphatase (219 aa).

It belongs to the HAD-like hydrolase superfamily. MtnX family.

It carries out the reaction 2-hydroxy-5-methylsulfanyl-3-oxopent-1-enyl phosphate + H2O = 1,2-dihydroxy-5-(methylsulfanyl)pent-1-en-3-one + phosphate. Its pathway is amino-acid biosynthesis; L-methionine biosynthesis via salvage pathway; L-methionine from S-methyl-5-thio-alpha-D-ribose 1-phosphate: step 4/6. Functionally, dephosphorylates 2-hydroxy-3-keto-5-methylthiopentenyl-1-phosphate (HK-MTPenyl-1-P) yielding 1,2-dihydroxy-3-keto-5-methylthiopentene (DHK-MTPene). In Bacillus cereus (strain ZK / E33L), this protein is 2-hydroxy-3-keto-5-methylthiopentenyl-1-phosphate phosphatase.